A 213-amino-acid chain; its full sequence is Kynurenine formamidase (213 aa).

Trp-18 is a substrate binding site. Zn(2+) contacts are provided by His-48, His-52, and Asp-54. The active-site Proton donor/acceptor is His-58. Zn(2+) contacts are provided by His-160 and Glu-172.

The protein belongs to the Cyclase 1 superfamily. KynB family. In terms of assembly, homodimer. Requires Zn(2+) as cofactor.

The enzyme catalyses N-formyl-L-kynurenine + H2O = L-kynurenine + formate + H(+). The protein operates within amino-acid degradation; L-tryptophan degradation via kynurenine pathway; L-kynurenine from L-tryptophan: step 2/2. In terms of biological role, catalyzes the hydrolysis of N-formyl-L-kynurenine to L-kynurenine, the second step in the kynurenine pathway of tryptophan degradation. In Burkholderia cenocepacia (strain ATCC BAA-245 / DSM 16553 / LMG 16656 / NCTC 13227 / J2315 / CF5610) (Burkholderia cepacia (strain J2315)), this protein is Kynurenine formamidase.